A 682-amino-acid chain; its full sequence is Potassium-transporting ATPase ATP-binding subunit (682 aa).

A run of 4 helical transmembrane segments spans residues 34-54 (PVMF…IAMA), 62-82 (ALFS…ANFA), 219-239 (IALT…TATL), and 254-274 (VLVA…LSAI). Catalysis depends on aspartate 307, which acts as the 4-aspartylphosphate intermediate. ATP contacts are provided by residues aspartate 344, glutamate 348, 377 to 384 (FTAQSRMS), and lysine 395. The Mg(2+) site is built by aspartate 518 and aspartate 522. Helical transmembrane passes span 588 to 608 (FAII…LNIM), 616 to 636 (AILS…PLAL), and 656 to 676 (IYGL…DLLL).

This sequence belongs to the cation transport ATPase (P-type) (TC 3.A.3) family. Type IA subfamily. In terms of assembly, the system is composed of three essential subunits: KdpA, KdpB and KdpC.

It localises to the cell inner membrane. The enzyme catalyses K(+)(out) + ATP + H2O = K(+)(in) + ADP + phosphate + H(+). In terms of biological role, part of the high-affinity ATP-driven potassium transport (or Kdp) system, which catalyzes the hydrolysis of ATP coupled with the electrogenic transport of potassium into the cytoplasm. This subunit is responsible for energy coupling to the transport system and for the release of the potassium ions to the cytoplasm. This chain is Potassium-transporting ATPase ATP-binding subunit, found in Escherichia coli (strain ATCC 8739 / DSM 1576 / NBRC 3972 / NCIMB 8545 / WDCM 00012 / Crooks).